Reading from the N-terminus, the 218-residue chain is MPLSETMYCAQQINIPPALPNMLKQFTKAAIRTQPRDVLQWAADYFSALSKGQDLPVKKRLELPVATQKTDTGLTPGLLKILHQQLTSKETVTKDELLPKWKALHLPVEQLDTILALGNFSENINWMQFFALACSALGGSITSALKHACEILTEDPEGGPAQIPFHMFRSLYTYLAHLDGEIPEEQIDSFLHSLEGQAQSQGGMVQPSNFTSLHTAEK.

In terms of domain architecture, RIIa spans 17-54 (PALPNMLKQFTKAAIRTQPRDVLQWAADYFSALSKGQD). The segment at 199 to 218 (QSQGGMVQPSNFTSLHTAEK) is disordered.

The protein belongs to the ropporin family. Component of axonemal radial spoke complexes.

It localises to the cell projection. Its subcellular location is the cilium. The protein resides in the flagellum. Its function is as follows. Functions as part of axonemal radial spoke complexes that play an important part in the motility of sperm and cilia. Important for male fertility. Involved in fibrous sheath integrity and sperm motility, plays a role in PKA-dependent signaling processes required for spermatozoa capacitation. The protein is Ropporin-1-like protein (ropn1l) of Danio rerio (Zebrafish).